The primary structure comprises 389 residues: Large envelope protein (389 aa).

Composition is skewed to polar residues over residues 1-10 (MGQNLSTSNP) and 85-95 (STNRQTGRQPT). Disordered stretches follow at residues 1 to 54 (MGQN…AFGL) and 73 to 106 (ILHTVPANPPPASTNRQTGRQPTPLSPPLRDTHP). Gly-2 carries the N-myristoyl glycine; by host lipid modification. A pre-S1 region spans residues 2 to 108 (GQNLSTSNPL…PPLRDTHPQA (107 aa)). Positions 2–163 (GQNLSTSNPL…FSRIGDPVTN (162 aa)) are pre-S. Residues 2-170 (GQNLSTSNPL…VTNMENITSG (169 aa)) are Virion surface; in external conformation-facing. Topologically, residues 2–242 (GQNLSTSNPL…PGYRWMCLRG (241 aa)) are intravirion; in internal conformation. Positions 109–163 (VQWNSTTFHQTLQDPRVRGLYFPAGGSSSGTVNPVPTTASPLSSIFSRIGDPVTN) are pre-S2. The chain crosses the membrane as a helical span at residues 171 to 191 (FLGPLLVLQAGFFLLTRILTI). Residues 192–242 (PQSLDSWWTSLNFRGGTTVCLGQNSQSPTSNHSPTSCPPTCPGYRWMCLRG) are Intravirion; in external conformation-facing. The helical transmembrane segment at 243-263 (FIIFLFILLLCLIFLLVLLEY) threads the bilayer. At 264-337 (QGMLHVCPLI…WASVRFSWLS (74 aa)) the chain is on the virion surface side. Residue Asn-309 is glycosylated (N-linked (GlcNAc...) asparagine; by host). Residues 338–358 (LLVPFVQWFVGLSPTVWLSAI) traverse the membrane as a helical segment. Over 359-364 (WMMWYW) the chain is Intravirion. The helical transmembrane segment at 365–387 (GPSLYSILSPFLPLLPIFFCLWV) threads the bilayer. At 388–389 (YI) the chain is on the virion surface side.

This sequence belongs to the orthohepadnavirus major surface antigen family. Li-HBsAg interacts with capsid protein and with HDV Large delta antigen. Isoform M associates with host chaperone CANX through its pre-S2 N glycan. This association may be essential for M proper secretion. In terms of processing, isoform M is N-terminally acetylated by host at a ratio of 90%, and N-glycosylated by host at the pre-S2 region. Post-translationally, myristoylated.

It localises to the virion membrane. In terms of biological role, the large envelope protein exists in two topological conformations, one which is termed 'external' or Le-HBsAg and the other 'internal' or Li-HBsAg. In its external conformation the protein attaches the virus to cell receptors and thereby initiating infection. This interaction determines the species specificity and liver tropism. This attachment induces virion internalization predominantly through caveolin-mediated endocytosis. The large envelope protein also assures fusion between virion membrane and endosomal membrane. In its internal conformation the protein plays a role in virion morphogenesis and mediates the contact with the nucleocapsid like a matrix protein. Its function is as follows. The middle envelope protein plays an important role in the budding of the virion. It is involved in the induction of budding in a nucleocapsid independent way. In this process the majority of envelope proteins bud to form subviral lipoprotein particles of 22 nm of diameter that do not contain a nucleocapsid. This Homo sapiens (Human) protein is Large envelope protein.